Reading from the N-terminus, the 89-residue chain is Small ribosomal subunit protein uS15 (89 aa).

Belongs to the universal ribosomal protein uS15 family. As to quaternary structure, part of the 30S ribosomal subunit. Forms a bridge to the 50S subunit in the 70S ribosome, contacting the 23S rRNA.

Its function is as follows. One of the primary rRNA binding proteins, it binds directly to 16S rRNA where it helps nucleate assembly of the platform of the 30S subunit by binding and bridging several RNA helices of the 16S rRNA. Functionally, forms an intersubunit bridge (bridge B4) with the 23S rRNA of the 50S subunit in the ribosome. The protein is Small ribosomal subunit protein uS15 of Shewanella sp. (strain ANA-3).